The sequence spans 131 residues: DCLPGWSSHEGHCYKVFNEYKTWKDAEKFCKKQGKSGHLVSVESSEEGDFVAKLISENLEKSHSIDFVWTGLTYKGRWKQCSSEWSDGSKIKYQKWGKQQPRKCLGLEKQTEFRKWVNLYCEEPQRFTCEI.

In terms of domain architecture, C-type lectin spans 1 to 131; the sequence is DCLPGWSSHE…EEPQRFTCEI (131 aa). Intrachain disulfides connect C2/C13, C30/C129, and C104/C121. The Ca(2+) site is built by S41, E43, and E47. A Ca(2+)-binding site is contributed by E130.

The protein belongs to the snaclec family. As to quaternary structure, heterodimer of subunits A and B; disulfide-linked. As to expression, expressed by the venom gland.

The protein resides in the secreted. Functionally, anticoagulant protein which binds to coagulation factor IX (F9) and coagulation factor X (F10) in the presence of calcium. It may bind the gamma-carboxyglutamic acid-domain regions of factors with a 1 to 1 stoichiometry. The dissociation constant (K(d)) are 6.6 nM for factor IX (F9) and 125 nM for factor X (F10). Does not bind carbohydrates. This Echis carinatus (Saw-scaled viper) protein is Snaclec coagulation factor IX/factor X-binding protein subunit A.